Here is an 89-residue protein sequence, read N- to C-terminus: Small ribosomal subunit protein uS14 (89 aa).

This sequence belongs to the universal ribosomal protein uS14 family. Part of the 30S ribosomal subunit. Contacts proteins S3 and S10.

Its function is as follows. Binds 16S rRNA, required for the assembly of 30S particles and may also be responsible for determining the conformation of the 16S rRNA at the A site. The polypeptide is Small ribosomal subunit protein uS14 (Chlorobium limicola (strain DSM 245 / NBRC 103803 / 6330)).